The sequence spans 351 residues: 3-dehydroquinate synthase (351 aa).

NAD(+)-binding positions include Asp60–Lys65, Gly94–Asp98, Thr118–Thr119, Lys131, Lys140, and Phe158–Thr161. Zn(2+) contacts are provided by Glu173, His239, and His256.

It belongs to the sugar phosphate cyclases superfamily. Dehydroquinate synthase family. It depends on Co(2+) as a cofactor. Zn(2+) is required as a cofactor. The cofactor is NAD(+).

It localises to the cytoplasm. It carries out the reaction 7-phospho-2-dehydro-3-deoxy-D-arabino-heptonate = 3-dehydroquinate + phosphate. The protein operates within metabolic intermediate biosynthesis; chorismate biosynthesis; chorismate from D-erythrose 4-phosphate and phosphoenolpyruvate: step 2/7. In terms of biological role, catalyzes the conversion of 3-deoxy-D-arabino-heptulosonate 7-phosphate (DAHP) to dehydroquinate (DHQ). The chain is 3-dehydroquinate synthase from Campylobacter jejuni subsp. jejuni serotype O:23/36 (strain 81-176).